A 255-amino-acid chain; its full sequence is tRNA pseudouridine synthase A (255 aa).

Asp-60 acts as the Nucleophile in catalysis. Substrate is bound at residue Tyr-118.

This sequence belongs to the tRNA pseudouridine synthase TruA family. In terms of assembly, homodimer.

The catalysed reaction is uridine(38/39/40) in tRNA = pseudouridine(38/39/40) in tRNA. Functionally, formation of pseudouridine at positions 38, 39 and 40 in the anticodon stem and loop of transfer RNAs. The chain is tRNA pseudouridine synthase A from Leuconostoc mesenteroides subsp. mesenteroides (strain ATCC 8293 / DSM 20343 / BCRC 11652 / CCM 1803 / JCM 6124 / NCDO 523 / NBRC 100496 / NCIMB 8023 / NCTC 12954 / NRRL B-1118 / 37Y).